A 496-amino-acid polypeptide reads, in one-letter code: Amino-acid acetyltransferase, mitochondrial (496 aa).

In terms of domain architecture, N-acetyltransferase spans 333–493 (YHGTDCLTNG…LDVIDSIQPT (161 aa)).

This sequence belongs to the acetyltransferase family.

It is found in the mitochondrion. The catalysed reaction is L-glutamate + acetyl-CoA = N-acetyl-L-glutamate + CoA + H(+). The protein operates within amino-acid biosynthesis; L-arginine biosynthesis; N(2)-acetyl-L-ornithine from L-glutamate: step 1/4. In terms of biological role, N-acetylglutamate synthase involved in arginine biosynthesis. The sequence is that of Amino-acid acetyltransferase, mitochondrial (arg2) from Schizosaccharomyces japonicus (strain yFS275 / FY16936) (Fission yeast).